The chain runs to 564 residues: Putative zinc metalloproteinase in scaA 5'region (564 aa).

Residues 1-564 (MTRLQDDFYD…KEADFSAEEF (564 aa)) form the Peptidase M13 domain. Residue histidine 478 participates in Zn(2+) binding. Glutamate 479 is a catalytic residue. 2 residues coordinate Zn(2+): histidine 482 and glutamate 538. Catalysis depends on aspartate 542, which acts as the Proton donor.

This sequence belongs to the peptidase M13 family. Zn(2+) serves as cofactor.

In Streptococcus gordonii (strain Challis / ATCC 35105 / BCRC 15272 / CH1 / DL1 / V288), this protein is Putative zinc metalloproteinase in scaA 5'region.